The chain runs to 395 residues: Elongation factor Tu (395 aa).

In terms of domain architecture, tr-type G spans 10–205 (KVHMNVGTIG…AMDSYFEDPV (196 aa)). Residues 19–26 (GHVDHGKT) are G1. 19-26 (GHVDHGKT) contributes to the GTP binding site. Residue Thr-26 coordinates Mg(2+). The G2 stretch occupies residues 60–64 (GITIN). The segment at 81–84 (DCPG) is G3. GTP is bound by residues 81 to 85 (DCPGH) and 136 to 139 (NKVD). The tract at residues 136 to 139 (NKVD) is G4. A G5 region spans residues 173-175 (SAF).

Belongs to the TRAFAC class translation factor GTPase superfamily. Classic translation factor GTPase family. EF-Tu/EF-1A subfamily. Monomer.

It is found in the cytoplasm. The catalysed reaction is GTP + H2O = GDP + phosphate + H(+). Its function is as follows. GTP hydrolase that promotes the GTP-dependent binding of aminoacyl-tRNA to the A-site of ribosomes during protein biosynthesis. This Treponema pallidum (strain Nichols) protein is Elongation factor Tu.